We begin with the raw amino-acid sequence, 178 residues long: Translation initiation factor IF-3 (178 aa).

This sequence belongs to the IF-3 family. As to quaternary structure, monomer.

The protein resides in the cytoplasm. In terms of biological role, IF-3 binds to the 30S ribosomal subunit and shifts the equilibrium between 70S ribosomes and their 50S and 30S subunits in favor of the free subunits, thus enhancing the availability of 30S subunits on which protein synthesis initiation begins. The sequence is that of Translation initiation factor IF-3 from Ureaplasma parvum serovar 3 (strain ATCC 700970).